The chain runs to 136 residues: Nucleoside diphosphate kinase (136 aa).

ATP contacts are provided by Lys10, Phe58, Arg86, Thr92, Arg104, and Asn114. The active-site Pros-phosphohistidine intermediate is the His117.

It belongs to the NDK family. As to quaternary structure, homohexamer. Mg(2+) is required as a cofactor.

It is found in the cytoplasm. It carries out the reaction a 2'-deoxyribonucleoside 5'-diphosphate + ATP = a 2'-deoxyribonucleoside 5'-triphosphate + ADP. It catalyses the reaction a ribonucleoside 5'-diphosphate + ATP = a ribonucleoside 5'-triphosphate + ADP. Major role in the synthesis of nucleoside triphosphates other than ATP. The ATP gamma phosphate is transferred to the NDP beta phosphate via a ping-pong mechanism, using a phosphorylated active-site intermediate. The chain is Nucleoside diphosphate kinase from Mycobacterium bovis (strain ATCC BAA-935 / AF2122/97).